A 334-amino-acid polypeptide reads, in one-letter code: Tetratricopeptide repeat protein 24 (334 aa).

4 TPR repeats span residues 35-68 (GPFY…CRQP), 72-105 (ATVL…HGSV), 112-145 (GRSF…AQDT), and 152-185 (WQAC…CQHE). Residues 220 to 258 (PGKLQTSRKAKTSARVQSSAEDAQESQWEGEASEGGHEK) are disordered. Over residues 233–246 (ARVQSSAEDAQESQ) the composition is skewed to polar residues.

The chain is Tetratricopeptide repeat protein 24 (Ttc24) from Mus musculus (Mouse).